The primary structure comprises 349 residues: Anthranilate phosphoribosyltransferase (349 aa).

Residues Gly-82, 85 to 86 (GD), 92 to 95 (NVST), 110 to 118 (KHGNRAVSG), and Ser-122 contribute to the 5-phospho-alpha-D-ribose 1-diphosphate site. Residue Gly-82 coordinates anthranilate. Ser-94 contacts Mg(2+). Asn-113 contacts anthranilate. Arg-168 is a binding site for anthranilate. Mg(2+)-binding residues include Asp-227 and Glu-228.

It belongs to the anthranilate phosphoribosyltransferase family. In terms of assembly, homodimer. Mg(2+) is required as a cofactor.

It carries out the reaction N-(5-phospho-beta-D-ribosyl)anthranilate + diphosphate = 5-phospho-alpha-D-ribose 1-diphosphate + anthranilate. The protein operates within amino-acid biosynthesis; L-tryptophan biosynthesis; L-tryptophan from chorismate: step 2/5. Catalyzes the transfer of the phosphoribosyl group of 5-phosphorylribose-1-pyrophosphate (PRPP) to anthranilate to yield N-(5'-phosphoribosyl)-anthranilate (PRA). In Pseudomonas savastanoi pv. phaseolicola (strain 1448A / Race 6) (Pseudomonas syringae pv. phaseolicola (strain 1448A / Race 6)), this protein is Anthranilate phosphoribosyltransferase.